Reading from the N-terminus, the 897-residue chain is F-BAR domain only protein 1 (897 aa).

Positions 1–276 (MIHFFHTLQG…VGFEEYLSSL (276 aa)) are mediates membrane-binding. An F-BAR domain is found at 2–248 (IHFFHTLQGE…NVENIGIENL (247 aa)). The stretch at 134–154 (LQKTREGYHSKCVELERLRKE) forms a coiled coil. A disordered region spans residues 475 to 537 (VEDSGLDSPS…PNPAPSSQSN (63 aa)). A compositionally biased stretch (polar residues) spans 501–520 (PSSQSQSKDSINAASQSRGG). Residues 630 to 894 (SWPVAAAITE…RFATGKYMAG (265 aa)) form the MHD domain.

This sequence belongs to the FCHO family. In terms of assembly, may oligomerize and form homotetramer. Interacts with acvr1l/alk8; linking this receptor to clathrin-mediated endocytosis.

Its subcellular location is the membrane. It localises to the clathrin-coated pit. In terms of biological role, may function in an early step of clathrin-mediated endocytosis. May regulate Bmp signaling by regulating clathrin-mediated endocytosis of Bmp receptors. This is F-BAR domain only protein 1 (fcho1) from Danio rerio (Zebrafish).